We begin with the raw amino-acid sequence, 428 residues long: UPF0597 protein BF3772 (428 aa).

The protein belongs to the UPF0597 family.

The sequence is that of UPF0597 protein BF3772 from Bacteroides fragilis (strain YCH46).